Reading from the N-terminus, the 353-residue chain is Photosystem II protein D1 (353 aa).

At T2 the chain carries N-acetylthreonine. Residue T2 is modified to Phosphothreonine. Transmembrane regions (helical) follow at residues 29 to 46 (YIGWFGVLMIPTLLTATS), 118 to 133 (HFLLGVACYMGREWEL), and 142 to 156 (WIAVAYSAPVAAATA). H118 contributes to the chlorophyll a binding site. Y126 provides a ligand contact to pheophytin a. Positions 170 and 189 each coordinate [CaMn4O5] cluster. The helical transmembrane segment at 197–218 (FHMLGVAGVFGGSLFSAMHGSL) threads the bilayer. H198 contacts chlorophyll a. A quinone-binding positions include H215 and 264–265 (SF). Residue H215 coordinates Fe cation. H272 is a binding site for Fe cation. A helical transmembrane segment spans residues 274–288 (FLAAWPVVGIWFTAL). [CaMn4O5] cluster contacts are provided by H332, E333, D342, and A344. The propeptide occupies 345 to 353 (AVEVPAING).

Belongs to the reaction center PufL/M/PsbA/D family. PSII is composed of 1 copy each of membrane proteins PsbA, PsbB, PsbC, PsbD, PsbE, PsbF, PsbH, PsbI, PsbJ, PsbK, PsbL, PsbM, PsbT, PsbX, PsbY, PsbZ, Psb30/Ycf12, at least 3 peripheral proteins of the oxygen-evolving complex and a large number of cofactors. It forms dimeric complexes. It depends on The D1/D2 heterodimer binds P680, chlorophylls that are the primary electron donor of PSII, and subsequent electron acceptors. It shares a non-heme iron and each subunit binds pheophytin, quinone, additional chlorophylls, carotenoids and lipids. D1 provides most of the ligands for the Mn4-Ca-O5 cluster of the oxygen-evolving complex (OEC). There is also a Cl(-1) ion associated with D1 and D2, which is required for oxygen evolution. The PSII complex binds additional chlorophylls, carotenoids and specific lipids. as a cofactor. In terms of processing, tyr-161 forms a radical intermediate that is referred to as redox-active TyrZ, YZ or Y-Z. Post-translationally, C-terminally processed by CTPA; processing is essential to allow assembly of the oxygen-evolving complex and thus photosynthetic growth.

It is found in the plastid. The protein localises to the chloroplast thylakoid membrane. It carries out the reaction 2 a plastoquinone + 4 hnu + 2 H2O = 2 a plastoquinol + O2. Photosystem II (PSII) is a light-driven water:plastoquinone oxidoreductase that uses light energy to abstract electrons from H(2)O, generating O(2) and a proton gradient subsequently used for ATP formation. It consists of a core antenna complex that captures photons, and an electron transfer chain that converts photonic excitation into a charge separation. The D1/D2 (PsbA/PsbD) reaction center heterodimer binds P680, the primary electron donor of PSII as well as several subsequent electron acceptors. In Hordeum vulgare (Barley), this protein is Photosystem II protein D1.